The sequence spans 114 residues: Pancreatic progenitor cell differentiation and proliferation factor (114 aa).

Position 9 is a phosphoserine (S9). Disordered regions lie at residues 22 to 47 and 75 to 114; these read GSTSSNSSCSSTECPGEAIPHPPGLP and AEHSEPPQASSSMTACGLARDAPRKQPGGQSSTASAGPPS. Over residues 23 to 33 the composition is skewed to low complexity; the sequence is STSSNSSCSST. The span at 102-114 shows a compositional bias: polar residues; it reads GGQSSTASAGPPS.

Belongs to the PPDPF family.

In terms of biological role, probable regulator of exocrine pancreas development. This is Pancreatic progenitor cell differentiation and proliferation factor (PPDPF) from Homo sapiens (Human).